We begin with the raw amino-acid sequence, 331 residues long: MDEFSENIERIALELLSNLVHGNATLSVPRNSSGNVISEYRRVSYNNRGSRHSFCVLIYMLSRVHRLQVRGGSFTVRGLYYDNPLLVRSQSRIAEARLDVCRMLRTSPLSLGILAASKGLVAGDLRLLMTNGDVLDSSLYGGPLTLPTDPEKIDRIETLAEFVLIVEKESVFESLLSRNVFGTFERRFILITGKGYPDCCTRRIVHRLTEENQLAAYILVDADPFGVEIMLVYRHGSKSMSFSSQGLTTPALRWIGLHPSEIPALGTGAVALVAGDNKKINDLLARHDLEPGVRQELRMLQDVQLKAEIESVIDFLTDDYIPNKINRNLFL.

Residues 1–120 (MDEFSENIER…LGILAASKGL (120 aa)) form the Topo IIA-type catalytic domain. The active-site O-(5'-phospho-DNA)-tyrosine intermediate is Tyr81. Mg(2+)-binding residues include Glu167 and Asp221.

Belongs to the TOP6A family. Mg(2+) is required as a cofactor.

It localises to the nucleus. The catalysed reaction is ATP-dependent breakage, passage and rejoining of double-stranded DNA.. In terms of biological role, required for meiotic recombination. Together with mei-P22, mediates DNA cleavage that forms the double-strand breaks (DSB) that initiate meiotic recombination. The chain is Meiotic recombination protein W68 from Drosophila melanogaster (Fruit fly).